The primary structure comprises 152 residues: Transcriptional repressor NrdR (152 aa).

A zinc finger lies at 3–34; that stretch reads CPFCNAADSKVIDSRLAAEGCQIRRRRECVSC. Positions 49 to 139 constitute an ATP-cone domain; it reads PRVIKSNGKN…VYQDFQDVEA (91 aa).

Belongs to the NrdR family. It depends on Zn(2+) as a cofactor.

Functionally, negatively regulates transcription of bacterial ribonucleotide reductase nrd genes and operons by binding to NrdR-boxes. In Acinetobacter baumannii (strain AB0057), this protein is Transcriptional repressor NrdR.